A 461-amino-acid polypeptide reads, in one-letter code: MQRVNMIMAESPGLITICLLGYLLSAECTVFLDHENANKILNRPKRYNSGKLEEFVQGNLERECMEEKCSFEEAREVFENTERTTEFWKQYVDGDQCESNPCLNGGSCKDDINSYECWCPFGFEGKNCELDVTCNIKNGRCEQFCKNSADNKVVCSCTEGYRLAENQKSCEPAVPFPCGRVSVSQTSKLTRAETVFPDVDYVNSTEAETILDNITQSTQSFNDFTRVVGGEDAKPGQFPWQVVLNGKVDAFCGGSIVNEKWIVTAAHCVETGVKITVVAGEHNIEETEHTEQKRNVIRIIPHHNYNAAINKYNHDIALLELDEPLVLNSYVTPICIADKEYTNIFLKFGSGYVSGWGRVFHKGRSALVLQYLRVPLVDRATCLRSTKFTIYNNMFCAGFHEGGRDSCQGDSGGPHVTEVEGTSFLTGIISWGEECAMKGKYGIYTKVSRYVNWIKEKTKLT.

The signal sequence occupies residues 1–28 (MQRVNMIMAESPGLITICLLGYLLSAEC). A propeptide spanning residues 29–46 (TVFLDHENANKILNRPKR) is cleaved from the precursor. Ca(2+) is bound by residues Y47, N48, E53, E54, E61, E63, E66, E67, E72, E73, and E76. The Gla domain occupies 47–92 (YNSGKLEEFVQGNLERECMEEKCSFEEAREVFENTERTTEFWKQYV). A 4-carboxyglutamate mark is found at E53, E54, E61, E63, E66, E67, E72, E73, E76, E79, and E82. Mg(2+) is bound at residue E61. A disulfide bond links C64 and C69. Residue E66 coordinates Mg(2+). E72 provides a ligand contact to Mg(2+). E76 serves as a coordination point for Mg(2+). Ca(2+) is bound at residue E82. Residue E82 coordinates Mg(2+). T85 carries O-linked (GalNAc...) threonine glycosylation. Residues E86, D93, G94, and Q96 each contribute to the Ca(2+) site. A 4-carboxyglutamate modification is found at E86. E86 is a Mg(2+) binding site. One can recognise an EGF-like 1; calcium-binding domain in the interval 93–129 (DGDQCESNPCLNGGSCKDDINSYECWCPFGFEGKNCE). Disulfide bonds link C97-C108, C102-C117, C119-C128, C134-C145, C141-C155, C157-C170, C178-C335, C252-C268, C382-C396, and C407-C435. S99 carries an O-linked (Glc...) serine glycan. S107 carries an O-linked (Fuc...) serine glycan. Residues D110 and D111 each coordinate Ca(2+). A (3R)-3-hydroxyaspartate modification is found at D110. Residue S114 is modified to Phosphoserine. The 42-residue stretch at 130-171 (LDVTCNIKNGRCEQFCKNSADNKVVCSCTEGYRLAENQKSCE) folds into the EGF-like 2 domain. The propeptide at 192 to 226 (AETVFPDVDYVNSTEAETILDNITQSTQSFNDFTR) is activation peptide. Sulfotyrosine is present on Y201. The N-linked (GlcNAc...) asparagine glycan is linked to N203. A Phosphoserine modification is found at S204. Phosphothreonine; alternate is present on T205. T205 carries an O-linked (GalNAc...) threonine; alternate glycan. N-linked (GlcNAc...) asparagine glycosylation occurs at N213. 2 O-linked (GalNAc...) threonine glycosylation sites follow: T215 and T225. The Peptidase S1 domain occupies 227-459 (VVGGEDAKPG…YVNWIKEKTK (233 aa)). The active-site Charge relay system is H267. 5 residues coordinate Ca(2+): E281, N283, E286, E288, and E291. The Charge relay system role is filled by D315. Catalysis depends on S411, which acts as the Charge relay system.

The protein belongs to the peptidase S1 family. Heterodimer of a light chain and a heavy chain; disulfide-linked. Interacts (inactive and activated) with F11 (activated) in calcium-dependent manner. Interacts with SERPINC1. Interacts (activated) with iripin-8, a serine protease inhibitor from Ixodes ricinus saliva. Interacts (inactive and activated) with nitrophorin-2, an anticoagulant protein from Rhodnius prolixus. Activated by factor XIa, which excises the activation peptide. The propeptide can also be removed by snake venom protease. Activated by coagulation factor VIIa-tissue factor (F7-F3) complex in calcium-dependent manner. In terms of processing, the iron and 2-oxoglutarate dependent 3-hydroxylation of aspartate and asparagine is (R) stereospecific within EGF domains. As to expression, detected in blood plasma (at protein level). Synthesized primarily in the liver and secreted in plasma.

It is found in the secreted. It carries out the reaction Selective cleavage of Arg-|-Ile bond in factor X to form factor Xa.. In terms of biological role, factor IX is a vitamin K-dependent plasma protein that participates in the intrinsic pathway of blood coagulation by converting factor X to its active form in the presence of Ca(2+) ions, phospholipids, and factor VIIIa. The polypeptide is Coagulation factor IX (F9) (Homo sapiens (Human)).